The primary structure comprises 435 residues: NADH-quinone oxidoreductase subunit D (435 aa).

The protein belongs to the complex I 49 kDa subunit family. NDH-1 is composed of 14 different subunits. Subunits NuoB, C, D, E, F, and G constitute the peripheral sector of the complex.

Its subcellular location is the cell inner membrane. The enzyme catalyses a quinone + NADH + 5 H(+)(in) = a quinol + NAD(+) + 4 H(+)(out). In terms of biological role, NDH-1 shuttles electrons from NADH, via FMN and iron-sulfur (Fe-S) centers, to quinones in the respiratory chain. The immediate electron acceptor for the enzyme in this species is believed to be ubiquinone. Couples the redox reaction to proton translocation (for every two electrons transferred, four hydrogen ions are translocated across the cytoplasmic membrane), and thus conserves the redox energy in a proton gradient. The chain is NADH-quinone oxidoreductase subunit D from Xanthomonas campestris pv. campestris (strain 8004).